The following is a 383-amino-acid chain: N-acetyldiaminopimelate deacetylase (383 aa).

Asp-75 is a catalytic residue. Glu-134 acts as the Proton acceptor in catalysis.

This sequence belongs to the peptidase M20A family. N-acetyldiaminopimelate deacetylase subfamily.

The catalysed reaction is N-acetyl-(2S,6S)-2,6-diaminopimelate + H2O = (2S,6S)-2,6-diaminopimelate + acetate. It functions in the pathway amino-acid biosynthesis; L-lysine biosynthesis via DAP pathway; LL-2,6-diaminopimelate from (S)-tetrahydrodipicolinate (acetylase route): step 3/3. Functionally, catalyzes the conversion of N-acetyl-diaminopimelate to diaminopimelate and acetate. The sequence is that of N-acetyldiaminopimelate deacetylase from Lactobacillus acidophilus (strain ATCC 700396 / NCK56 / N2 / NCFM).